The sequence spans 254 residues: 5-oxoprolinase subunit A (254 aa).

The protein belongs to the LamB/PxpA family. As to quaternary structure, forms a complex composed of PxpA, PxpB and PxpC.

It carries out the reaction 5-oxo-L-proline + ATP + 2 H2O = L-glutamate + ADP + phosphate + H(+). Functionally, catalyzes the cleavage of 5-oxoproline to form L-glutamate coupled to the hydrolysis of ATP to ADP and inorganic phosphate. This is 5-oxoprolinase subunit A from Bacillus mycoides (strain KBAB4) (Bacillus weihenstephanensis).